A 292-amino-acid polypeptide reads, in one-letter code: Nucleotide-binding protein SACE_2139 (292 aa).

Residue 15-22 (GLSGAGRS) coordinates ATP. 66 to 69 (DVRS) is a GTP binding site.

This sequence belongs to the RapZ-like family.

In terms of biological role, displays ATPase and GTPase activities. The polypeptide is Nucleotide-binding protein SACE_2139 (Saccharopolyspora erythraea (strain ATCC 11635 / DSM 40517 / JCM 4748 / NBRC 13426 / NCIMB 8594 / NRRL 2338)).